The sequence spans 368 residues: F-box only protein 28 (368 aa).

Positions 1-11 are enriched in basic and acidic residues; that stretch reads MAAASEERMAE. The interval 1–56 is disordered; it reads MAAASEERMAEEGGGGHGDGGSCSAAGSAQRQPPAPPSQAPPPGSQAPAAPALAPD. Gly residues predominate over residues 12–21; sequence EGGGGHGDGG. A compositionally biased stretch (low complexity) spans 22–32; the sequence is SCSAAGSAQRQ. The span at 33-45 shows a compositional bias: pro residues; sequence PPAPPSQAPPPGS. The segment covering 46–55 has biased composition (low complexity); sequence QAPAAPALAP. The region spanning 61–109 is the F-box domain; that stretch reads NNTLVALPIVAIENILSFMSYDEISQLRLVCKRMDLVCQRMLNQGFLKV. Phosphoserine is present on residues Ser235 and Ser242. Thr270 carries the post-translational modification Phosphothreonine. A disordered region spans residues 328 to 368; it reads MESAVGTSSGSGQSEESPRKRRKATEAIDSLRKSKRLRNRK. Phosphoserine is present on Ser344.

As to quaternary structure, part of a SCF (SKP1-cullin-F-box) protein ligase complex.

It is found in the chromosome. It localises to the centromere. Its subcellular location is the kinetochore. Functionally, probably recognizes and binds to some phosphorylated proteins and promotes their ubiquitination and degradation. The polypeptide is F-box only protein 28 (Fbxo28) (Mus musculus (Mouse)).